The following is a 561-amino-acid chain: Potassium-transporting ATPase potassium-binding subunit (561 aa).

10 consecutive transmembrane segments (helical) span residues 4 to 24 (IVMQ…PLGI), 65 to 85 (AVSV…VLML), 133 to 153 (IGLT…LFAV), 177 to 197 (LYIL…QGVV), 253 to 273 (FTNL…VVMF), 285 to 305 (AIMT…TISE), 380 to 400 (GLYG…LLVG), 417 to 437 (MVCL…AVAV), 484 to 504 (MVGA…ALYL), and 528 to 548 (FIGL…LPAL).

Belongs to the KdpA family. The system is composed of three essential subunits: KdpA, KdpB and KdpC.

It localises to the cell membrane. Its function is as follows. Part of the high-affinity ATP-driven potassium transport (or Kdp) system, which catalyzes the hydrolysis of ATP coupled with the electrogenic transport of potassium into the cytoplasm. This subunit binds the extracellular potassium ions and delivers the ions to the membrane domain of KdpB through an intramembrane tunnel. This is Potassium-transporting ATPase potassium-binding subunit from Listeria monocytogenes serotype 4b (strain CLIP80459).